Consider the following 87-residue polypeptide: Small ribosomal subunit protein bS21 (87 aa).

Positions 47–63 are enriched in basic and acidic residues; that stretch reads YEKPSEKRARQKAEAVR. Residues 47 to 87 are disordered; that stretch reads YEKPSEKRARQKAEAVRRARKLARKRAQREGLLPMPKKPGR. A compositionally biased stretch (basic residues) spans 64–73; sequence RARKLARKRA.

The protein belongs to the bacterial ribosomal protein bS21 family.

This Caulobacter vibrioides (strain ATCC 19089 / CIP 103742 / CB 15) (Caulobacter crescentus) protein is Small ribosomal subunit protein bS21.